Consider the following 164-residue polypeptide: Mineralocorticoid receptor (164 aa).

The NR LBD domain occupies 1–162; that stretch reads QYSWMCLSSF…EFPRCWWRSS (162 aa). Residues Arg-15 and Thr-143 each coordinate 21-hydroxyprogesterone. Residues Arg-15 and Thr-143 each contribute to the aldosterone site. Positions 15 and 143 each coordinate progesterone.

This sequence belongs to the nuclear hormone receptor family. NR3 subfamily. As to quaternary structure, heteromultimeric cytoplasmic complex with HSP90, HSP70, and FKBP4, in the absence of ligand. After ligand binding, it translocates to the nucleus and binds to DNA as a homodimer and as a heterodimer with NR3C1. Binds the coactivator NCOA2. May interact with HSD11B2 in the absence of ligand. Binds the coactivators NCOA1, TIF1 and NRIP1. Phosphorylated.

It is found in the cytoplasm. The protein localises to the nucleus. The protein resides in the endoplasmic reticulum membrane. In terms of biological role, receptor for both mineralocorticoids (MC) such as aldosterone and glucocorticoids (GC) such as corticosterone or cortisol. Binds to mineralocorticoid response elements (MRE) and transactivates target genes. The effect of MC is to increase ion and water transport and thus raise extracellular fluid volume and blood pressure and lower potassium levels. The sequence is that of Mineralocorticoid receptor (NR3C2) from Sus scrofa (Pig).